We begin with the raw amino-acid sequence, 150 residues long: Deoxyuridine 5'-triphosphate nucleotidohydrolase (150 aa).

Substrate contacts are provided by residues 69-71 (RSG), Asn-82, 86-88 (LID), and Lys-96.

This sequence belongs to the dUTPase family. The cofactor is Mg(2+).

The enzyme catalyses dUTP + H2O = dUMP + diphosphate + H(+). Its pathway is pyrimidine metabolism; dUMP biosynthesis; dUMP from dCTP (dUTP route): step 2/2. In terms of biological role, this enzyme is involved in nucleotide metabolism: it produces dUMP, the immediate precursor of thymidine nucleotides and it decreases the intracellular concentration of dUTP so that uracil cannot be incorporated into DNA. The polypeptide is Deoxyuridine 5'-triphosphate nucleotidohydrolase (Neisseria gonorrhoeae (strain ATCC 700825 / FA 1090)).